The following is a 196-amino-acid chain: MTLQCTKSAGHWRMVVWDEEGFQGRRHEFTAECPSVLELGFETVRSLKVLSGAWVGFEHAGFQGQQYVLERGDYPGWDAWGGNTAYPAERLTSFRPVACANHRDSRLTIFEQENFLGRKGELNDDYPSLQAMGWDGTEVGSFHVQSGAWVCSQFPGYRGFQYILESDHHSGDYKHFREWGSHAHTFQVQSVRRIQQ.

Threonine 2 carries the N-acetylthreonine modification. The tract at residues 2-11 (TLQCTKSAGH) is N-terminal arm. Beta/gamma crystallin 'Greek key' domains are found at residues 12–51 (WRMVVWDEEGFQGRRHEFTAECPSVLELGFETVRSLKVLS) and 52–98 (GAWV…RPVA). The connecting peptide stretch occupies residues 99–104 (CANHRD). 2 Beta/gamma crystallin 'Greek key' domains span residues 105–146 (SRLT…HVQS) and 147–195 (GAWV…RRIQ).

Belongs to the beta/gamma-crystallin family. Homo/heterodimer, or complexes of higher-order. The structure of beta-crystallin oligomers seems to be stabilized through interactions between the N-terminal arms.

In terms of biological role, crystallins are the dominant structural components of the vertebrate eye lens. The sequence is that of Beta-crystallin A4 (Cryba4) from Mus musculus (Mouse).